The sequence spans 83 residues: Small ribosomal subunit protein bS16 (83 aa).

This sequence belongs to the bacterial ribosomal protein bS16 family.

The chain is Small ribosomal subunit protein bS16 from Acidovorax ebreus (strain TPSY) (Diaphorobacter sp. (strain TPSY)).